A 778-amino-acid polypeptide reads, in one-letter code: E3 UFM1-protein ligase 1 homolog (778 aa).

The disordered stretch occupies residues 404 to 477; the sequence is NNLSTSHDAD…TVQQSAGNTR (74 aa). A compositionally biased stretch (basic residues) spans 445-457; the sequence is KSTKKHQRGRAAA.

It belongs to the UFL1 family.

Functionally, E3 UFM1-protein ligase that mediates ufmylation of target proteins. This is E3 UFM1-protein ligase 1 homolog from Drosophila virilis (Fruit fly).